Reading from the N-terminus, the 1563-residue chain is Integrator complex subunit 5-like protein (1563 aa).

Composition is skewed to basic and acidic residues over residues Met1–Asn21 and Glu31–Asn44. 3 disordered regions span residues Met1 to Asp63, Lys102 to Tyr208, and Asn270 to Pro310. Positions Gly52–Asp63 are enriched in acidic residues. Composition is skewed to low complexity over residues Thr109–Ala133 and Asn141–Asn202. A helical transmembrane segment spans residues Asp350–Leu370. Residues Gln381–Gln398 are compositionally biased toward low complexity. 4 disordered regions span residues Gln381–Ile417, Ser466–Thr498, Phe637–Ser694, and Ile784–Ile828. Pro residues predominate over residues Phe405 to Arg414. Low complexity-rich tracts occupy residues Ser468 to Ser496, Asn639 to Asn686, and Asn786 to Gln824. A helical transmembrane segment spans residues Ile877–Leu897. 2 disordered regions span residues Ser1154–Gly1173 and Lys1268–Glu1303. The span at Gly1160–Tyr1172 shows a compositional bias: acidic residues. Residues Ser1277–Gln1288 are compositionally biased toward low complexity. Acidic residues predominate over residues Gln1289–Glu1303.

This sequence belongs to the Integrator subunit 5 family. As to quaternary structure, component of the Integrator complex. The core complex associates with protein phosphatase 2A subunits, to form the Integrator-PP2A (INTAC) complex.

The protein localises to the nucleus. It is found in the cytoplasm. Its subcellular location is the nucleus membrane. Component of the integrator complex, a multiprotein complex that terminates RNA polymerase II (Pol II) transcription in the promoter-proximal region of genes. The integrator complex provides a quality checkpoint during transcription elongation by driving premature transcription termination of transcripts that are unfavorably configured for transcriptional elongation: the complex terminates transcription by (1) catalyzing dephosphorylation of the C-terminal domain (CTD) of Pol II subunit polr2a, (2) degrading the exiting nascent RNA transcript via endonuclease activity and (3) promoting the release of Pol II from bound DNA. The integrator complex is also involved in terminating the synthesis of non-coding Pol II transcripts, such as enhancer RNAs (eRNAs), small nuclear RNAs (snRNAs), telomerase RNAs and long non-coding RNAs (lncRNAs). The chain is Integrator complex subunit 5-like protein from Dictyostelium discoideum (Social amoeba).